Consider the following 158-residue polypeptide: NADPH-dependent 7-cyano-7-deazaguanine reductase (158 aa).

Cys56 (thioimide intermediate) is an active-site residue. Residue Asp63 is the Proton donor of the active site. Residues 78–80 and 97–98 contribute to the substrate site; these read LES and HE.

The protein belongs to the GTP cyclohydrolase I family. QueF type 1 subfamily.

It is found in the cytoplasm. The enzyme catalyses 7-aminomethyl-7-carbaguanine + 2 NADP(+) = 7-cyano-7-deazaguanine + 2 NADPH + 3 H(+). It functions in the pathway tRNA modification; tRNA-queuosine biosynthesis. Catalyzes the NADPH-dependent reduction of 7-cyano-7-deazaguanine (preQ0) to 7-aminomethyl-7-deazaguanine (preQ1). This Rhodopseudomonas palustris (strain TIE-1) protein is NADPH-dependent 7-cyano-7-deazaguanine reductase.